The primary structure comprises 262 residues: Global transcriptional regulator CodY (262 aa).

The GAF domain stretch occupies residues 1 to 159 (MAHLLEKTRK…ASTVVGIQLL (159 aa)). The H-T-H motif DNA-binding region spans 207 to 226 (ASVIADRIGITRSVIVNALR).

It belongs to the CodY family.

The protein localises to the cytoplasm. DNA-binding global transcriptional regulator which is involved in the adaptive response to starvation and acts by directly or indirectly controlling the expression of numerous genes in response to nutrient availability. During rapid exponential growth, CodY is highly active and represses genes whose products allow adaptation to nutrient depletion. The protein is Global transcriptional regulator CodY of Streptococcus pneumoniae (strain JJA).